The sequence spans 220 residues: Chalcone--flavanone isomerase B (220 aa).

The substrate site is built by threonine 50, asparagine 115, and threonine 192.

This sequence belongs to the chalcone isomerase family.

It catalyses the reaction a chalcone = a flavanone.. The protein operates within secondary metabolite biosynthesis; flavonoid biosynthesis. Functionally, catalyzes the intramolecular cyclization of bicyclic chalcones into tricyclic (S)-flavanones. Responsible for the isomerization of 4,2',4',6'-tetrahydroxychalcone (also termed chalcone) into naringenin. This chain is Chalcone--flavanone isomerase B (CHI2), found in Petunia hybrida (Petunia).